Here is a 315-residue protein sequence, read N- to C-terminus: Olfactory receptor 4K3 (315 aa).

Residues 1–25 lie on the Extracellular side of the membrane; that stretch reads MAWSNQSAVTEFILRGLSSSLELQI. Residue asparagine 5 is glycosylated (N-linked (GlcNAc...) asparagine). Residues 26–49 form a helical membrane-spanning segment; that stretch reads FYFLFFSIVYAATVLGNLLIVVTI. Residues 50–57 lie on the Cytoplasmic side of the membrane; it reads ASEPHLHS. The helical transmembrane segment at 58–79 threads the bilayer; it reads PMYFLLGNLSFIDMSLASFATP. Over 80-100 the chain is Extracellular; sequence KMIADFLREHKAISFEGCMTQ. An intrachain disulfide couples cysteine 97 to cysteine 189. Residues 101 to 120 traverse the membrane as a helical segment; sequence MFFLHLLGGAEIVLLISMSF. At 121–139 the chain is on the cytoplasmic side; sequence DRYVAICKPLHYLTIMSRR. Residues 140–158 traverse the membrane as a helical segment; sequence MCVGLVILSWIVGIFHALS. The Extracellular portion of the chain corresponds to 159-195; it reads QLAFTVNLPFCGPNEVDSFFCDLPLVIKLACVDTYIL. A helical transmembrane segment spans residues 196-219; that stretch reads GVFMISTSGMIALVCFILLVISYT. The Cytoplasmic segment spans residues 220–235; sequence IILVTVRQRSSGGSSK. A helical transmembrane segment spans residues 236–258; the sequence is ALSTCSAHFTVVTLFFGPCTFIY. The Extracellular segment spans residues 259 to 269; the sequence is VWPFTNFPIDK. A helical membrane pass occupies residues 270 to 289; it reads VLSVFYTIYTPLLNPVIYTV. The Cytoplasmic portion of the chain corresponds to 290–315; that stretch reads RNKDVKYSMRKLSSHIFKSRKTDHTP.

The protein belongs to the G-protein coupled receptor 1 family.

It is found in the cell membrane. In terms of biological role, odorant receptor. The polypeptide is Olfactory receptor 4K3 (OR4K3) (Homo sapiens (Human)).